Reading from the N-terminus, the 400-residue chain is Cysteine desulfurase (400 aa).

Pyridoxal 5'-phosphate contacts are provided by residues 72-73 (GT), Asn152, Gln180, and 200-202 (SGH). Lys203 carries the post-translational modification N6-(pyridoxal phosphate)lysine. Thr238 is a binding site for pyridoxal 5'-phosphate. Cys326 serves as the catalytic Cysteine persulfide intermediate. Cys326 lines the [2Fe-2S] cluster pocket.

Belongs to the class-V pyridoxal-phosphate-dependent aminotransferase family. NifS/IscS subfamily. Homodimer. It depends on pyridoxal 5'-phosphate as a cofactor.

It catalyses the reaction (sulfur carrier)-H + L-cysteine = (sulfur carrier)-SH + L-alanine. Catalyzes the removal of elemental sulfur atoms from cysteine to produce alanine. Seems to participate in the biosynthesis of the nitrogenase metalloclusters by providing the inorganic sulfur required for the Fe-S core formation. In Gluconacetobacter diazotrophicus (strain ATCC 49037 / DSM 5601 / CCUG 37298 / CIP 103539 / LMG 7603 / PAl5), this protein is Cysteine desulfurase.